We begin with the raw amino-acid sequence, 294 residues long: 4-hydroxy-tetrahydrodipicolinate synthase (294 aa).

Thr-48 serves as a coordination point for pyruvate. Catalysis depends on Tyr-136, which acts as the Proton donor/acceptor. Catalysis depends on Lys-164, which acts as the Schiff-base intermediate with substrate. Ile-206 is a binding site for pyruvate.

Belongs to the DapA family. In terms of assembly, homotetramer; dimer of dimers.

The protein localises to the cytoplasm. It catalyses the reaction L-aspartate 4-semialdehyde + pyruvate = (2S,4S)-4-hydroxy-2,3,4,5-tetrahydrodipicolinate + H2O + H(+). It participates in amino-acid biosynthesis; L-lysine biosynthesis via DAP pathway; (S)-tetrahydrodipicolinate from L-aspartate: step 3/4. Catalyzes the condensation of (S)-aspartate-beta-semialdehyde [(S)-ASA] and pyruvate to 4-hydroxy-tetrahydrodipicolinate (HTPA). The protein is 4-hydroxy-tetrahydrodipicolinate synthase of Phenylobacterium zucineum (strain HLK1).